The primary structure comprises 1196 residues: DNA-directed RNA polymerase subunit beta (1196 aa).

Belongs to the RNA polymerase beta chain family. The RNAP catalytic core consists of 2 alpha, 1 beta, 1 beta' and 1 omega subunit. When a sigma factor is associated with the core the holoenzyme is formed, which can initiate transcription.

It carries out the reaction RNA(n) + a ribonucleoside 5'-triphosphate = RNA(n+1) + diphosphate. DNA-dependent RNA polymerase catalyzes the transcription of DNA into RNA using the four ribonucleoside triphosphates as substrates. The protein is DNA-directed RNA polymerase subunit beta of Lactococcus lactis subsp. cremoris (strain SK11).